Consider the following 537-residue polypeptide: Quadr-hydrophobin (537 aa).

Positions 1–17 are cleaved as a signal peptide; sequence MKFITVAAALFASTSLA. 4 hydrophobin regions span residues 63 to 199, 200 to 299, 300 to 421, and 422 to 537; these read GGNP…QNPI, GGNP…ENPT, GGNP…QDPL, and GGNP…RAII. 2 N-linked (GlcNAc...) asparagine glycosylation sites follow: asparagine 70 and asparagine 113. Intrachain disulfides connect cysteine 134-cysteine 183, cysteine 144-cysteine 174, cysteine 145-cysteine 157, cysteine 184-cysteine 195, cysteine 234-cysteine 283, cysteine 244-cysteine 274, cysteine 245-cysteine 257, cysteine 284-cysteine 295, cysteine 356-cysteine 405, cysteine 366-cysteine 396, cysteine 367-cysteine 379, cysteine 406-cysteine 417, cysteine 471-cysteine 520, cysteine 481-cysteine 511, cysteine 482-cysteine 494, and cysteine 521-cysteine 532.

It belongs to the cerato-ulmin hydrophobin family. Homotetramer. Further self-assembles to form highly ordered films at water-air interfaces through intermolecular interactions.

It is found in the secreted. The protein localises to the cell wall. Its function is as follows. Aerial growth, conidiation, and dispersal of filamentous fungi in the environment rely upon a capability of their secreting small amphipathic proteins called hydrophobins (HPBs) with low sequence identity. Class I can self-assemble into an outermost layer of rodlet bundles on aerial cell surfaces, conferring cellular hydrophobicity that supports fungal growth, development and dispersal; whereas Class II form highly ordered films at water-air interfaces through intermolecular interactions but contribute nothing to the rodlet structure. This chain is Quadr-hydrophobin, found in Cordyceps militaris (Caterpillar fungus).